The following is a 496-amino-acid chain: Transactivator/viroplasmin protein (496 aa).

The interval 102-128 (RPNQGIQIPKKNEDHSSSSSKEEKGIQ) is disordered. The segment covering 111–128 (KKNEDHSSSSSKEEKGIQ) has biased composition (basic and acidic residues).

It belongs to the caulimoviridae viroplasmin family.

The protein localises to the host cytoplasm. Enhances the translation of downstream ORFs on polycistronic mRNAs derived from carnation etched ring virus. The sequence is that of Transactivator/viroplasmin protein from Dianthus caryophyllus (Carnation).